Reading from the N-terminus, the 130-residue chain is Small ribosomal subunit protein uS9 (130 aa).

The disordered stretch occupies residues 99 to 130 (KRAGLLTRDPRMKERKKPGLKAARRSPQFSKR). The segment covering 111 to 130 (KERKKPGLKAARRSPQFSKR) has biased composition (basic residues).

It belongs to the universal ribosomal protein uS9 family.

The sequence is that of Small ribosomal subunit protein uS9 from Staphylococcus aureus (strain Mu3 / ATCC 700698).